Reading from the N-terminus, the 271-residue chain is MAGLAISPPLGLSFSSRTRNPKPTSFLSHNQRNPIRRIVSALQSPYGDSLKAGLSSNVSGSPIKIDNKAPRFGVIEAKKGNPPVMPSVMTPGGPLDLSSVLFRNRIIFIGQPINAQVAQRVISQLVTLASIDDKSDILMYLNCPGGSTYSVLAIYDCMSWIKPKVGTVAFGVAASQGALLLAGGEKGMRYAMPNTRVMIHQPQTGCGGHVEDVRRQVNEAIEARQKIDRMYAAFTGQPLEKVQQYTERDRFLSASEALEFGLIDGLLETEY.

Residues 1–30 (MAGLAISPPLGLSFSSRTRNPKPTSFLSHN) are disordered. The transit peptide at 1 to 77 (MAGLAISPPL…KAPRFGVIEA (77 aa)) directs the protein to the chloroplast. Residues 13–30 (SFSSRTRNPKPTSFLSHN) are compositionally biased toward polar residues. Catalysis depends on Ser175, which acts as the Nucleophile. The active site involves His200.

This sequence belongs to the peptidase S14 family. As to quaternary structure, component of the chloroplastic Clp protease core complex which consist of at least 16 proteins: CLPP4 (3 copies), CLPP5 (3 copies), CLPR4 (2 copies), ClpP1 (1 copy), CLPP6 (1 copy), CLPR2 (1 copy), CLPT1 (1 copy), CLPT2 (1 copy) and 3 copies of CLPP3 and/or CLPR1 and/or CLPR3. The core complex is organized in two heptameric rings, one containing CLPP3,4,5,6 in a 1:2:3:1 ratio and the other CLPP1 and CLPR1,2,3,4 in a 3:1:1:1:1 ratio. As to expression, mostly expressed in leaves. Also detected in stems, and to a lower extent, in roots (at protein level).

It localises to the plastid. The protein resides in the chloroplast stroma. The catalysed reaction is Hydrolysis of proteins to small peptides in the presence of ATP and magnesium. alpha-casein is the usual test substrate. In the absence of ATP, only oligopeptides shorter than five residues are hydrolyzed (such as succinyl-Leu-Tyr-|-NHMec, and Leu-Tyr-Leu-|-Tyr-Trp, in which cleavage of the -Tyr-|-Leu- and -Tyr-|-Trp bonds also occurs).. Cleaves peptides in various proteins in a process that requires ATP hydrolysis. Has a chymotrypsin-like activity. Plays a major role in the degradation of misfolded proteins. Essential protein required for chloroplast development and integrity. This Arabidopsis thaliana (Mouse-ear cress) protein is ATP-dependent Clp protease proteolytic subunit 6, chloroplastic.